The sequence spans 425 residues: Malate transporter MleP (425 aa).

11 helical membrane passes run 11 to 31 (GISLPLYAFFVAVIIVVTLLG), 35 to 55 (LDMVGLTLLLVTLGHLLYFIG), 65 to 85 (LGGGSVFTLIGATLLSFFHIV), 96 to 116 (FMGGKFGFLDFYIAALICGSI), 134 to 154 (IALITMVIGFFSVGLVGMLIG), 196 to 216 (IFSQLAPAVTFGNILAIIGAL), 246 to 266 (IKLDAQQIGTGMLFAFALLMA), 269 to 289 (ILNKFFPNIHQYAFMIIIVFI), 310 to 330 (VIMTNLTHAVLAGIGLALIDL), 339 to 359 (WQFVVLCLTSVVVMGLASWFL), and 401 to 421 (FAQMANRLCGAIVLIFGGILI).

Belongs to the 2-hydroxycarboxylate transporter (2-HCT) (TC 2.A.24) family.

It is found in the cell membrane. It carries out the reaction (S)-lactate(in) + (S)-malate(out) = (S)-lactate(out) + (S)-malate(in). The catalysed reaction is (R)-lactate(in) + (S)-malate(out) = (R)-lactate(out) + (S)-malate(in). It catalyses the reaction glycolate(in) + (S)-malate(out) = glycolate(out) + (S)-malate(in). In terms of biological role, secondary transporter involved in malolactic fermentation. Catalyzes the uptake of divalent malate into the cell coupled to the exit of monovalent lactate, a product of malate degradation (precursor/product exchange). The malate/lactate exchange is electrogenic and results in the generation of a membrane potential. Is highly selective for the S-enantiomer of malate. In the absence of lactate, MleP can also catalyze the proton-dependent transport of malate. In vitro, transports a range of substrates that contain the 2-hydroxycarboxylate motif, HO-CR(2)-COO(-), with a preference for malate, lactate and glycolate. Modification of the OH or the COO(-) groups of the 2-hydroxycarboxylate motif drastically reduces the affinity of the transporter for the substrates, indicating their relevance in substrate recognition. Significant activity is also observed with some 2-oxocarboxylates. Transports only poorly citromalate. Citrate binds to MleP but is not translocated. The protein is Malate transporter MleP of Lactococcus lactis subsp. lactis (strain IL1403) (Streptococcus lactis).